Here is an 83-residue protein sequence, read N- to C-terminus: Small ribosomal subunit protein uS17 (83 aa).

This sequence belongs to the universal ribosomal protein uS17 family. In terms of assembly, part of the 30S ribosomal subunit.

One of the primary rRNA binding proteins, it binds specifically to the 5'-end of 16S ribosomal RNA. The protein is Small ribosomal subunit protein uS17 of Chlamydia abortus (strain DSM 27085 / S26/3) (Chlamydophila abortus).